The sequence spans 988 residues: Fanconi-associated nuclease 1 (988 aa).

The segment at 1-39 (MESQTGRKSARRLSMTKKKSQSVCPIKERTSNGGAASIT) is disordered. Residues 8 to 20 (KSARRLSMTKKKS) are compositionally biased toward basic residues. A UBZ4-type zinc finger spans residues 49–77 (KLACPLCGKLVPRYKINEHIDSQCQNFLV). 4 residues coordinate Zn(2+): Cys52, Cys55, His67, and Cys72. Disordered regions lie at residues 87 to 115 (TKAP…TSPF), 164 to 256 (TRVS…NTTE), and 269 to 307 (SSIE…TTQE). Over residues 89–98 (APSNSALASN) the composition is skewed to polar residues. Basic and acidic residues-rich tracts occupy residues 99-111 (NERE…KDAD) and 167-182 (SDNE…RSQK). Residues 183-195 (ENCMNSLTFGSER) show a composition bias toward polar residues. Low complexity predominate over residues 224 to 238 (SDSSISSDVHTSSSS). Residues 272 to 283 (ERGDESKVKSDQ) show a composition bias toward basic and acidic residues. Positions 284–303 (TEASSSAYDVPTSKSPIKSK) are enriched in polar residues. Residues 636–663 (SRGVEILQRLKRYEDAVEQLRNLLSQSV) are a coiled coil. Positions 805, 931, 946, and 947 each coordinate Mn(2+). In terms of domain architecture, VRR-NUC spans 866–978 (VETLQDLIAD…GADVEVCHVT (113 aa)).

The protein belongs to the FAN1 family. Interacts with fancd2 (when monoubiquitinated). The cofactor is Mn(2+). Requires Mg(2+) as cofactor.

It localises to the nucleus. It carries out the reaction Hydrolytically removes 5'-nucleotides successively from the 3'-hydroxy termini of 3'-hydroxy-terminated oligonucleotides.. Functionally, nuclease required for the repair of DNA interstrand cross-links (ICL) recruited at sites of DNA damage by monoubiquitinated FANCD2. Specifically involved in repair of ICL-induced DNA breaks by being required for efficient homologous recombination, probably in the resolution of homologous recombination intermediates. Acts as a 5'-3' exonuclease that anchors at a cut end of DNA and cleaves DNA successively at every third nucleotide, allowing to excise an ICL from one strand through flanking incisions. Probably keeps excising with 3'-flap annealing until it reaches and unhooks the ICL. Acts at sites that have a 5'-terminal phosphate anchor at a nick or a 1- or 2-nucleotide flap and is augmented by a 3' flap. Also has endonuclease activity toward 5'-flaps. The protein is Fanconi-associated nuclease 1 (fan1) of Danio rerio (Zebrafish).